The primary structure comprises 84 residues: Small ribosomal subunit protein uS17 (84 aa).

The protein belongs to the universal ribosomal protein uS17 family. As to quaternary structure, part of the 30S ribosomal subunit.

One of the primary rRNA binding proteins, it binds specifically to the 5'-end of 16S ribosomal RNA. In Borrelia hermsii (strain HS1 / DAH), this protein is Small ribosomal subunit protein uS17.